Here is a 234-residue protein sequence, read N- to C-terminus: Opacity protein opA51 (234 aa).

Ala1 is a signal peptide.

It belongs to the opacity porin family.

It localises to the cell outer membrane. Its function is as follows. Implicated in a number of adherence functions. OPA proteins are implicated in pathogenesis and are subject to phase variation. The protein is Opacity protein opA51 (opaB) of Neisseria gonorrhoeae.